Here is a 658-residue protein sequence, read N- to C-terminus: MFQNNPLLAQLKQQIEANKEYVEGTVKASDKAFGFLECDKKSYFIPPMEMKKVMHGDKVKAVVKREDDKEQVEIDSLLEPMLDRFIAQVRFNKDNKLQLIVDHPSIKNIIPANTHKKVTETLESGDWVVAQLKTHPLRDDRFLFAQVTQFICKADDNFAPWWVTLARHEQPREPVANEKSYELHDELDREDLTSLYFTTIDSPSTQDMDDALYIEPIKQGEVQTGWRLVVAIADPTAYIPENSNLEKAARQRCFTNYLPGFNIPMLPRELSDDLCSLVPNEKRPALVGYIETDLAGNITGDTRFVSAWVESKAKLAYDNVSDYLEQVENAWQPESAETKQQIDWLHQFTLARIEWRRNNALLFKESGDYSFELNEDGSVRDIHVEYRRIANQMIEESMIIANICCAKFLADNAKTGVFNTHAGFDPKNLELAQKFLLDTLANDENRDALTALYAPEKLATLEGYCEMRRSIDEFPEKFLELRLRRYLTFAEFKSEVAPHLGLGISHYATWTSPIRKYGDMVNHRLIKQVLLGKQAKTVEEGILVRLQEARRQNRLVERDIADWLYARYLFPMVEQAVEFDCEIADVSRGGVRAKVIANGAQIFVPFSTLHDKKEEMEFRPEEIALYIKGEKAYQIGQAVKVKLTEVRLETRSIVGNII.

An RNB domain is found at 189 to 530 (REDLTSLYFT…VNHRLIKQVL (342 aa)). Residues 576-658 (AVEFDCEIAD…ETRSIVGNII (83 aa)) enclose the S1 motif domain.

It belongs to the RNR ribonuclease family. RNase II subfamily.

The protein localises to the cytoplasm. It catalyses the reaction Exonucleolytic cleavage in the 3'- to 5'-direction to yield nucleoside 5'-phosphates.. Involved in mRNA degradation. Hydrolyzes single-stranded polyribonucleotides processively in the 3' to 5' direction. This is Exoribonuclease 2 from Actinobacillus pleuropneumoniae serotype 7 (strain AP76).